Consider the following 290-residue polypeptide: Virginiamycin B lyase (290 aa).

His226 contributes to the substrate binding site. Glu265 lines the Mg(2+) pocket. His267 acts as the Proton acceptor in catalysis. Residue Glu282 coordinates Mg(2+).

It belongs to the Vgb family. In terms of assembly, monomer. Requires Mg(2+) as cofactor.

Functionally, inactivates the type B streptogramin antibiotics by linearizing the lactone ring at the ester linkage, generating a free phenylglycine carboxylate and converting the threonyl moiety into 2-amino-butenoic acid. The sequence is that of Virginiamycin B lyase from Mycolicibacterium vanbaalenii (strain DSM 7251 / JCM 13017 / BCRC 16820 / KCTC 9966 / NRRL B-24157 / PYR-1) (Mycobacterium vanbaalenii).